The following is a 1622-amino-acid chain: DNA (cytosine-5)-methyltransferase 1 (1622 aa).

Residues 1–145 (MPARTAPARV…RRSKSDSETM (145 aa)) are interaction with DNMT3A. Interaction with the PRC2/EED-EZH2 complex stretches follow at residues 1–342 (MPAR…VERK) and 304–610 (TPEP…TVIN). Position 15 is a phosphoserine (serine 15). The region spanning 16 to 109 (PAGSLPDHVR…TQKANGCPAN (94 aa)) is the DMAP1-binding domain. Lysine 70 is subject to N6,N6-dimethyllysine; by EHMT2. The segment at 100 to 360 (TQKANGCPAN…IPKLNPPQCP (261 aa)) is disordered. Positions 126–137 (PRSRPKPRGPRR) are enriched in basic residues. Serine 138 is subject to Phosphoserine. At lysine 139 the chain carries N6-methyllysine; by SETD7. Serine 140 is subject to Phosphoserine; by PKB/AKT1. The tract at residues 146 to 213 (IEASSSSVAT…TESRASRAGE (68 aa)) is interaction with DNMT3B. Serine 149 and serine 151 each carry phosphoserine. A compositionally biased stretch (low complexity) spans 149 to 166 (SSSSVATRRTTRQTTITS). Phosphothreonine is present on threonine 163. At lysine 169 the chain carries N6-acetyllysine. Positions 173–200 (KRKPKEDSEKGNANESAAEERDQDKKRR) match the Nuclear localization signal motif. 4 stretches are compositionally biased toward basic and acidic residues: residues 176-197 (PKED…DQDK), 207-222 (RASR…ERVR), 237-269 (DDRR…THLD), and 276-300 (KDKR…KEEV). Residue threonine 304 is modified to Phosphothreonine. Residues 327 to 556 (KPEPLSIPVQ…NVNRFTEDSL (230 aa)) are DNA replication foci-targeting sequence. 2 residues coordinate Zn(2+): cysteine 359 and cysteine 362. Lysine 372 bears the N6-acetyllysine mark. Residue serine 400 is modified to Phosphoserine. Residues cysteine 420 and histidine 424 each contribute to the Zn(2+) site. Serine 515 and serine 555 each carry phosphoserine. The CXXC-type zinc finger occupies 650-696 (NTMKRRRCGVCEVCQQPECGKCKACKDMVKFGGTGRSKQACLKRRCP). Zn(2+) contacts are provided by cysteine 657, cysteine 660, cysteine 663, cysteine 668, cysteine 671, cysteine 674, cysteine 690, and cysteine 695. An autoinhibitory linker region spans residues 697 to 758 (NLAVKEADED…TYYWKVSIDE (62 aa)). The tract at residues 702-733 (EADEDEEADDDIPELPSPKKLHQGKKKKQNKD) is disordered. The segment covering 703–714 (ADEDEEADDDIP) has biased composition (acidic residues). Serine 718 carries the phosphoserine modification. The span at 720-731 (KKLHQGKKKKQN) shows a compositional bias: basic residues. Serine 736 is modified (phosphoserine). Position 753 is an N6-acetyllysine (lysine 753). Residues 759–884 (ETLEVGDCVS…QDYARFESPP (126 aa)) form the BAH 1 domain. Serine 882 is subject to Phosphoserine. An N6-acetyllysine mark is found at lysine 895, lysine 961, and lysine 980. Positions 977–1105 (TYRKYSDYIK…SKTKSFEDPP (129 aa)) constitute a BAH 2 domain. A disordered region spans residues 1099–1138 (KSFEDPPNHARSPGNKGKGKGKGKGKGKPQVSEPKEPEAA). 6 repeat units span residues 1114–1115 (KG), 1116–1117 (KG), 1118–1119 (KG), 1120–1121 (KG), 1122–1123 (KG), and 1124–1125 (KG). Residues 1114–1127 (KGKGKGKGKGKGKP) are 7 X 2 AA tandem repeats of K-G. Basic residues predominate over residues 1115-1125 (GKGKGKGKGKG). Lysine 1116, lysine 1118, lysine 1120, lysine 1122, lysine 1124, and lysine 1126 each carry N6-acetyllysine. A 7; approximate repeat occupies 1126-1127 (KP). The interval 1126–1622 (KPQVSEPKEP…KGKEETTTED (497 aa)) is interaction with the PRC2/EED-EZH2 complex. Residues 1144–1603 (LRTLDVFSGC…LEIKLCLLAS (460 aa)) enclose the SAM-dependent MTase C5-type domain. The catalytic stretch occupies residues 1144 to 1622 (LRTLDVFSGC…KGKEETTTED (479 aa)). S-adenosyl-L-methionine contacts are provided by residues serine 1151, 1155-1156 (GL), 1173-1174 (EM), 1195-1196 (DC), and cysteine 1196. Cysteine 1231 is an active-site residue. Lysine 1354 is subject to N6-acetyllysine. The residue at position 1436 (serine 1436) is a Phosphoserine. Residues asparagine 1582 and valine 1584 each coordinate S-adenosyl-L-methionine. A Glycyl lysine isopeptide (Lys-Gly) (interchain with G-Cter in SUMO2) cross-link involves residue lysine 1613.

It belongs to the class I-like SAM-binding methyltransferase superfamily. C5-methyltransferase family. In terms of assembly, homodimer. Forms a stable complex with E2F1, BB1 and HDAC1. Forms a complex with DMAP1 and HDAC2, with direct interaction. Interacts with the PRC2/EED-EZH2 complex. Probably part of a corepressor complex containing ZNF304, TRIM28, SETDB1 and DNMT1. Interacts with UHRF1; promoting its recruitment to hemimethylated DNA. Interacts with USP7, promoting its deubiquitination. Interacts with PCNA. Interacts with MBD2 and MBD3. Interacts with DNMT3A and DNMT3B. Interacts with UBC9. Interacts with CSNK1D. Interacts with HDAC1. Interacts with BAZ2A/TIP5. Interacts with SIRT7. Interacts with ZNF263; recruited to the SIX3 promoter along with other proteins involved in chromatin modification and transcriptional corepression where it contributes to transcriptional repression. Interacts with L3MBTL3 and DCAF5; the interaction requires DNMT1 methylation at Lys-139 and is necessary to target DNMT1 for ubiquitination by the CRL4-DCAF5 E3 ubiquitin ligase complex and proteasomal degradation. Interacts with PHF20L1; the interaction requires DNMT1 methylation at Lys-139 and protects DNMT1 from ubiquitination and proteasomal degradation. In terms of processing, sumoylated; sumoylation increases activity. Acetylation on multiple lysines, mainly by KAT2B/PCAF, regulates cell cycle G(2)/M transition. Deacetylation of Lys-1116 and Lys-1354 by SIRT1 increases methyltransferase activity. Post-translationally, phosphorylation of Ser-151 by CDKs is important for enzymatic activity and protein stability. Phosphorylation of Ser-140 by AKT1 prevents methylation by SETD7 thereby increasing DNMT1 stability. In terms of processing, methylation at Lys-139 by SETD7 is necessary for the regulation of DNMT1 proteasomal degradation. Ubiquitinated by UHRF1; interaction with USP7 counteracts ubiquitination by UHRF1 by promoting deubiquitination and preventing degradation by the proteasome. Isoforms 0 and 8 are highly expressed in placenta, brain, lung, spleen, kidney, heart, and at much lower levels in liver. Isoform 1 is expressed in cerebellum, isoform 2 in muscle and testis, isoform 3 in lung, isoform 4 in spleen and brain, and isoform 5 in brain.

It is found in the nucleus. It catalyses the reaction a 2'-deoxycytidine in DNA + S-adenosyl-L-methionine = a 5-methyl-2'-deoxycytidine in DNA + S-adenosyl-L-homocysteine + H(+). Functionally, methylates CpG residues. Preferentially methylates hemimethylated DNA. Associates with DNA replication sites in S phase maintaining the methylation pattern in the newly synthesized strand, that is essential for epigenetic inheritance. Associates with chromatin during G2 and M phases to maintain DNA methylation independently of replication. It is responsible for maintaining methylation patterns established in development. DNA methylation is coordinated with methylation of histones. Mediates transcriptional repression by direct binding to HDAC2. In association with DNMT3B and via the recruitment of CTCFL/BORIS, involved in activation of BAG1 gene expression by modulating dimethylation of promoter histone H3 at H3K4 and H3K9. Probably forms a corepressor complex required for activated KRAS-mediated promoter hypermethylation and transcriptional silencing of tumor suppressor genes (TSGs) or other tumor-related genes in colorectal cancer (CRC) cells. Also required to maintain a transcriptionally repressive state of genes in undifferentiated embryonic stem cells (ESCs). Associates at promoter regions of tumor suppressor genes (TSGs) leading to their gene silencing. Promotes tumor growth. The protein is DNA (cytosine-5)-methyltransferase 1 (Dnmt1) of Rattus norvegicus (Rat).